Consider the following 397-residue polypeptide: Chorismate synthase (397 aa).

NADP(+) contacts are provided by Arg-40 and Arg-46. Residues 129–131 (RSS), 257–258 (QA), Gly-302, 317–321 (KPISS), and Arg-343 each bind FMN.

This sequence belongs to the chorismate synthase family. In terms of assembly, homotetramer. FMNH2 serves as cofactor.

It carries out the reaction 5-O-(1-carboxyvinyl)-3-phosphoshikimate = chorismate + phosphate. It functions in the pathway metabolic intermediate biosynthesis; chorismate biosynthesis; chorismate from D-erythrose 4-phosphate and phosphoenolpyruvate: step 7/7. In terms of biological role, catalyzes the anti-1,4-elimination of the C-3 phosphate and the C-6 proR hydrogen from 5-enolpyruvylshikimate-3-phosphate (EPSP) to yield chorismate, which is the branch point compound that serves as the starting substrate for the three terminal pathways of aromatic amino acid biosynthesis. This reaction introduces a second double bond into the aromatic ring system. This chain is Chorismate synthase, found in Pelodictyon phaeoclathratiforme (strain DSM 5477 / BU-1).